The primary structure comprises 71 residues: DNA-directed RNA polymerase subunit omega (71 aa).

The protein belongs to the RNA polymerase subunit omega family. In terms of assembly, the RNAP catalytic core consists of 2 alpha, 1 beta, 1 beta' and 1 omega subunit. When a sigma factor is associated with the core the holoenzyme is formed, which can initiate transcription.

The enzyme catalyses RNA(n) + a ribonucleoside 5'-triphosphate = RNA(n+1) + diphosphate. In terms of biological role, promotes RNA polymerase assembly. Latches the N- and C-terminal regions of the beta' subunit thereby facilitating its interaction with the beta and alpha subunits. This chain is DNA-directed RNA polymerase subunit omega, found in Alkaliphilus oremlandii (strain OhILAs) (Clostridium oremlandii (strain OhILAs)).